Consider the following 263-residue polypeptide: 3-methyl-2-oxobutanoate hydroxymethyltransferase (263 aa).

Mg(2+)-binding residues include aspartate 45 and aspartate 84. Residues aspartate 45 to serine 46, aspartate 84, and lysine 112 contribute to the 3-methyl-2-oxobutanoate site. Mg(2+) is bound at residue glutamate 114. Glutamate 181 acts as the Proton acceptor in catalysis.

The protein belongs to the PanB family. As to quaternary structure, homodecamer; pentamer of dimers. Mg(2+) is required as a cofactor.

Its subcellular location is the cytoplasm. The catalysed reaction is 3-methyl-2-oxobutanoate + (6R)-5,10-methylene-5,6,7,8-tetrahydrofolate + H2O = 2-dehydropantoate + (6S)-5,6,7,8-tetrahydrofolate. It participates in cofactor biosynthesis; (R)-pantothenate biosynthesis; (R)-pantoate from 3-methyl-2-oxobutanoate: step 1/2. Catalyzes the reversible reaction in which hydroxymethyl group from 5,10-methylenetetrahydrofolate is transferred onto alpha-ketoisovalerate to form ketopantoate. This Chromohalobacter salexigens (strain ATCC BAA-138 / DSM 3043 / CIP 106854 / NCIMB 13768 / 1H11) protein is 3-methyl-2-oxobutanoate hydroxymethyltransferase.